We begin with the raw amino-acid sequence, 317 residues long: Beta-ketoacyl-[acyl-carrier-protein] synthase III (317 aa).

Catalysis depends on residues Cys112 and His244. Residues 245-249 (QANLR) are ACP-binding. Asn274 is a catalytic residue.

This sequence belongs to the thiolase-like superfamily. FabH family. As to quaternary structure, homodimer.

It is found in the cytoplasm. It carries out the reaction malonyl-[ACP] + acetyl-CoA + H(+) = 3-oxobutanoyl-[ACP] + CO2 + CoA. Its pathway is lipid metabolism; fatty acid biosynthesis. Catalyzes the condensation reaction of fatty acid synthesis by the addition to an acyl acceptor of two carbons from malonyl-ACP. Catalyzes the first condensation reaction which initiates fatty acid synthesis and may therefore play a role in governing the total rate of fatty acid production. Possesses both acetoacetyl-ACP synthase and acetyl transacylase activities. Its substrate specificity determines the biosynthesis of branched-chain and/or straight-chain of fatty acids. The polypeptide is Beta-ketoacyl-[acyl-carrier-protein] synthase III (Shigella dysenteriae serotype 1 (strain Sd197)).